The following is a 1802-amino-acid chain: Transposon Ty4-H Gag-Pol polyprotein (1802 aa).

A coiled-coil region spans residues arginine 39–asparagine 115. Positions asparagine 381–tyrosine 501 are ty4 protease. Aspartate 414 acts as the For protease activity; shared with dimeric partner in catalysis. The integrase-type zinc finger-like stretch occupies residues alanine 539–cysteine 599. The Integrase catalytic domain maps to threonine 619–proline 786. Mg(2+)-binding residues include aspartate 630 and aspartate 695. The segment at lysine 1223–lysine 1248 is disordered. Residues arginine 1375–asparagine 1510 form the Reverse transcriptase Ty1/copia-type domain. Residues aspartate 1383, aspartate 1462, aspartate 1463, aspartate 1644, glutamate 1686, and aspartate 1720 each contribute to the Mg(2+) site. The region spanning aspartate 1644 to lysine 1790 is the RNase H Ty1/copia-type domain.

The protease is a homodimer, whose active site consists of two apposed aspartic acid residues. In terms of processing, proteolytically processed into capsid protein (CA), Ty4 protease (PR), integrase (IN) and reverse transcriptase/ribonuclease H (RT) proteins. Initially, virus-like particles (VLPs) are composed of the structural unprocessed proteins Gag and Gag-Pol, and also contain the host initiator methionine tRNA (tRNA(i)-Met) which serves as a primer for minus-strand DNA synthesis, and a dimer of genomic Ty RNA. Processing of the polyproteins occurs within the particle and proceeds by an ordered pathway, called maturation. First, the protease (PR) is released by autocatalytic cleavage of the Gag-Pol polyprotein, and this cleavage is a prerequisite for subsequent processing at the remaining sites to release the mature structural and catalytic proteins. Maturation takes place prior to the RT reaction and is required to produce transposition-competent VLPs.

The protein localises to the cytoplasm. Its subcellular location is the nucleus. The catalysed reaction is DNA(n) + a 2'-deoxyribonucleoside 5'-triphosphate = DNA(n+1) + diphosphate. It carries out the reaction Endonucleolytic cleavage to 5'-phosphomonoester.. Its function is as follows. Capsid protein (CA) is the structural component of the virus-like particle (VLP), forming the shell that encapsulates the retrotransposons dimeric RNA genome. Functionally, the aspartyl protease (PR) mediates the proteolytic cleavages of the Gag and Gag-Pol polyproteins after assembly of the VLP. In terms of biological role, reverse transcriptase/ribonuclease H (RT) is a multifunctional enzyme that catalyzes the conversion of the retro-elements RNA genome into dsDNA within the VLP. The enzyme displays a DNA polymerase activity that can copy either DNA or RNA templates, and a ribonuclease H (RNase H) activity that cleaves the RNA strand of RNA-DNA heteroduplexes during plus-strand synthesis and hydrolyzes RNA primers. The conversion leads to a linear dsDNA copy of the retrotransposon that includes long terminal repeats (LTRs) at both ends. Integrase (IN) targets the VLP to the nucleus, where a subparticle preintegration complex (PIC) containing at least integrase and the newly synthesized dsDNA copy of the retrotransposon must transit the nuclear membrane. Once in the nucleus, integrase performs the integration of the dsDNA into the host genome. In Saccharomyces cerevisiae (strain ATCC 204508 / S288c) (Baker's yeast), this protein is Transposon Ty4-H Gag-Pol polyprotein (TY4B-H).